The sequence spans 1003 residues: Alpha-1,4 glucan phosphorylase L isozyme, chloroplastic/amyloplastic (1003 aa).

A chloroplast-targeting transit peptide spans 1–64 (MASMTMRFHP…RRRSAFSVKC (64 aa)). Disordered stretches follow at residues 71 to 91 (KQKV…SSFA) and 526 to 593 (SSEE…KKLP). The span at 537–553 (GEEEETSKEGGEEEEEK) shows a compositional bias: acidic residues. Residues 569–580 (EVEKAIAEKDGT) are compositionally biased toward basic and acidic residues. Lys-849 bears the N6-(pyridoxal phosphate)lysine mark.

It belongs to the glycogen phosphorylase family. Pyridoxal 5'-phosphate serves as cofactor. Found predominantly in cotyledons and early seed coat.

The protein resides in the plastid. It is found in the chloroplast. It localises to the amyloplast. The enzyme catalyses [(1-&gt;4)-alpha-D-glucosyl](n) + phosphate = [(1-&gt;4)-alpha-D-glucosyl](n-1) + alpha-D-glucose 1-phosphate. Phosphorylase is an important allosteric enzyme in carbohydrate metabolism. Enzymes from different sources differ in their regulatory mechanisms and in their natural substrates. However, all known phosphorylases share catalytic and structural properties. In terms of biological role, the L isoform exhibits higher affinity for unbranched substrates such as glucan-like amylose and maltodextrin. The polypeptide is Alpha-1,4 glucan phosphorylase L isozyme, chloroplastic/amyloplastic (PHO1) (Vicia faba (Broad bean)).